A 513-amino-acid chain; its full sequence is ATP synthase subunit alpha 1 (513 aa).

An ATP-binding site is contributed by 169–176 (GDRQTGKT).

The protein belongs to the ATPase alpha/beta chains family. In terms of assembly, F-type ATPases have 2 components, CF(1) - the catalytic core - and CF(0) - the membrane proton channel. CF(1) has five subunits: alpha(3), beta(3), gamma(1), delta(1), epsilon(1). CF(0) has three main subunits: a(1), b(2) and c(9-12). The alpha and beta chains form an alternating ring which encloses part of the gamma chain. CF(1) is attached to CF(0) by a central stalk formed by the gamma and epsilon chains, while a peripheral stalk is formed by the delta and b chains.

It localises to the cell inner membrane. It catalyses the reaction ATP + H2O + 4 H(+)(in) = ADP + phosphate + 5 H(+)(out). In terms of biological role, produces ATP from ADP in the presence of a proton gradient across the membrane. The alpha chain is a regulatory subunit. This chain is ATP synthase subunit alpha 1, found in Photobacterium profundum (strain SS9).